Here is a 469-residue protein sequence, read N- to C-terminus: Bifunctional protein GlmU (469 aa).

Residues 1–237 form a pyrophosphorylase region; sequence MTTNRKFAIA…SHEVLGVNTR (237 aa). UDP-N-acetyl-alpha-D-glucosamine is bound by residues 12 to 15, Lys-26, Gln-78, 83 to 84, 105 to 107, Gly-144, Glu-162, Asn-177, and Asn-235; these read LAAG, GT, and SGD. Asp-107 serves as a coordination point for Mg(2+). Asn-235 contributes to the Mg(2+) binding site. The interval 238-258 is linker; sequence QDLASLDAHLRLQKCQQLMSA. An N-acetyltransferase region spans residues 259-469; that stretch reads GVSIFKPETC…KKRAEQKKKK (211 aa). UDP-N-acetyl-alpha-D-glucosamine-binding residues include Arg-341 and Lys-359. His-371 serves as the catalytic Proton acceptor. UDP-N-acetyl-alpha-D-glucosamine contacts are provided by Tyr-374 and Asn-385. Acetyl-CoA-binding positions include Ala-388, 394 to 395, Ser-413, Ala-431, and Arg-448; that span reads NY.

The protein in the N-terminal section; belongs to the N-acetylglucosamine-1-phosphate uridyltransferase family. In the C-terminal section; belongs to the transferase hexapeptide repeat family. Homotrimer. Requires Mg(2+) as cofactor.

It localises to the cytoplasm. The enzyme catalyses alpha-D-glucosamine 1-phosphate + acetyl-CoA = N-acetyl-alpha-D-glucosamine 1-phosphate + CoA + H(+). It catalyses the reaction N-acetyl-alpha-D-glucosamine 1-phosphate + UTP + H(+) = UDP-N-acetyl-alpha-D-glucosamine + diphosphate. It participates in nucleotide-sugar biosynthesis; UDP-N-acetyl-alpha-D-glucosamine biosynthesis; N-acetyl-alpha-D-glucosamine 1-phosphate from alpha-D-glucosamine 6-phosphate (route II): step 2/2. It functions in the pathway nucleotide-sugar biosynthesis; UDP-N-acetyl-alpha-D-glucosamine biosynthesis; UDP-N-acetyl-alpha-D-glucosamine from N-acetyl-alpha-D-glucosamine 1-phosphate: step 1/1. Its pathway is bacterial outer membrane biogenesis; LPS lipid A biosynthesis. Functionally, catalyzes the last two sequential reactions in the de novo biosynthetic pathway for UDP-N-acetylglucosamine (UDP-GlcNAc). The C-terminal domain catalyzes the transfer of acetyl group from acetyl coenzyme A to glucosamine-1-phosphate (GlcN-1-P) to produce N-acetylglucosamine-1-phosphate (GlcNAc-1-P), which is converted into UDP-GlcNAc by the transfer of uridine 5-monophosphate (from uridine 5-triphosphate), a reaction catalyzed by the N-terminal domain. The sequence is that of Bifunctional protein GlmU from Koribacter versatilis (strain Ellin345).